Reading from the N-terminus, the 883-residue chain is Phosphoenolpyruvate carboxylase (883 aa).

Catalysis depends on residues histidine 138 and lysine 546.

The protein belongs to the PEPCase type 1 family. Mg(2+) is required as a cofactor.

The catalysed reaction is oxaloacetate + phosphate = phosphoenolpyruvate + hydrogencarbonate. Functionally, forms oxaloacetate, a four-carbon dicarboxylic acid source for the tricarboxylic acid cycle. The protein is Phosphoenolpyruvate carboxylase of Escherichia coli O81 (strain ED1a).